The chain runs to 177 residues: Nucleoside triphosphate/diphosphate phosphatase (177 aa).

The active-site Proton donor is R23. 6 residues coordinate Mg(2+): N87, D103, D105, D107, D120, and E123.

The protein belongs to the Ntdp family. Mg(2+) serves as cofactor.

The catalysed reaction is a ribonucleoside 5'-triphosphate + H2O = a ribonucleoside 5'-diphosphate + phosphate + H(+). The enzyme catalyses a ribonucleoside 5'-diphosphate + H2O = a ribonucleoside 5'-phosphate + phosphate + H(+). Has nucleoside phosphatase activity towards nucleoside triphosphates and nucleoside diphosphates. This Streptococcus thermophilus (strain CNRZ 1066) protein is Nucleoside triphosphate/diphosphate phosphatase.